We begin with the raw amino-acid sequence, 296 residues long: Protoheme IX farnesyltransferase (296 aa).

9 helical membrane-spanning segments follow: residues 29-49 (LSGL…GHVA), 54-74 (ALTV…NCWM), 98-118 (FTAL…LALV), 121-141 (PLTA…YTPM), 147-167 (LALL…WTAA), 175-195 (GLAL…AVSI), 221-241 (WIAA…PLRV), 246-266 (YGAV…AGVG), and 275-295 (NFFL…FLGA).

This sequence belongs to the UbiA prenyltransferase family. Protoheme IX farnesyltransferase subfamily.

It localises to the cell inner membrane. It catalyses the reaction heme b + (2E,6E)-farnesyl diphosphate + H2O = Fe(II)-heme o + diphosphate. Its pathway is porphyrin-containing compound metabolism; heme O biosynthesis; heme O from protoheme: step 1/1. Functionally, converts heme B (protoheme IX) to heme O by substitution of the vinyl group on carbon 2 of heme B porphyrin ring with a hydroxyethyl farnesyl side group. The protein is Protoheme IX farnesyltransferase of Anaeromyxobacter sp. (strain Fw109-5).